The primary structure comprises 401 residues: Probable aspartate/prephenate aminotransferase (401 aa).

3 residues coordinate L-aspartate: Gly-39, Trp-125, and Asn-175. An N6-(pyridoxal phosphate)lysine modification is found at Lys-239. Residue Arg-375 coordinates L-aspartate.

Belongs to the class-I pyridoxal-phosphate-dependent aminotransferase family. Homodimer. Pyridoxal 5'-phosphate is required as a cofactor.

The protein resides in the cytoplasm. It carries out the reaction L-aspartate + 2-oxoglutarate = oxaloacetate + L-glutamate. The catalysed reaction is L-arogenate + 2-oxoglutarate = prephenate + L-glutamate. Catalyzes the reversible conversion of aspartate and 2-oxoglutarate to glutamate and oxaloacetate. Can also transaminate prephenate in the presence of glutamate. This chain is Probable aspartate/prephenate aminotransferase (aatA), found in Rickettsia conorii (strain ATCC VR-613 / Malish 7).